Here is a 344-residue protein sequence, read N- to C-terminus: 2-methyl-6-phytyl-1,4-hydroquinone methyltransferase, chloroplastic (344 aa).

A chloroplast-targeting transit peptide spans 1 to 62 (MACSMLNGVD…LTTVTKCTLS (62 aa)). Topologically, residues 63–313 (ASERPASQPR…PVHPLVFLYR (251 aa)) are chloroplast intermembrane. Residues 121–130 (VVDVGGGTGF) are SAM motif I. The interval 166-179 (CRIIEGDAEDLPFP) is SAM motif II. Residues 207 to 220 (RVLKLGGKACLIGP) form an SAM motif III region. Residues 314–334 (FLLGALASTYYVLVPIYMWIK) traverse the membrane as a helical segment. The Stromal portion of the chain corresponds to 335–344 (DKIFPKGMPL).

It belongs to the class I-like SAM-binding methyltransferase superfamily. MPBQ/MBSQ MT family.

Its subcellular location is the plastid. The protein localises to the chloroplast inner membrane. The enzyme catalyses 2-methyl-6-phytyl-1,4-benzene-1,4-diol + S-adenosyl-L-methionine = 2,3-dimethyl-6-phytylbenzene-1,4-diol + S-adenosyl-L-homocysteine + H(+). It catalyses the reaction 2-methyl-6-(all-trans-nonaprenyl)benzene-1,4-diol + S-adenosyl-L-methionine = plastoquinol-9 + S-adenosyl-L-homocysteine + H(+). It carries out the reaction 6-geranylgeranyl-2-methylbenzene-1,4-diol + S-adenosyl-L-methionine = 6-geranylgeranyl-2,3-dimethylbenzene-1,4-diol + S-adenosyl-L-homocysteine + H(+). Its pathway is cofactor biosynthesis; tocopherol biosynthesis. In terms of biological role, involved in a key methylation step in both tocopherols (vitamin E) and plastoquinone synthesis. Catalyzes the conversion of 2-methyl-6-phytyl-1,4-hydroquinone (MPBQ) to 2,3-dimethyl-6-phytyl-1,4-hydroquinone (DMPQ, a substrate for tocopherol cyclase), and 2-methyl-6-solanyl-1,4-benzoquinone (MSBQ) to plastoquinone. The protein is 2-methyl-6-phytyl-1,4-hydroquinone methyltransferase, chloroplastic of Spinacia oleracea (Spinach).